The primary structure comprises 148 residues: FAD synthase (148 aa).

Residues 14 to 15 (VF), 19 to 22 (HAGH), and D100 contribute to the ATP site.

This sequence belongs to the archaeal FAD synthase family. In terms of assembly, homodimer. A divalent metal cation is required as a cofactor.

It carries out the reaction FMN + ATP + H(+) = FAD + diphosphate. The protein operates within cofactor biosynthesis; FAD biosynthesis; FAD from FMN: step 1/1. Its function is as follows. Catalyzes the transfer of the AMP portion of ATP to flavin mononucleotide (FMN) to produce flavin adenine dinucleotide (FAD) coenzyme. The protein is FAD synthase of Pyrococcus horikoshii (strain ATCC 700860 / DSM 12428 / JCM 9974 / NBRC 100139 / OT-3).